Reading from the N-terminus, the 442-residue chain is NAD kinase 2, mitochondrial (442 aa).

The transit peptide at 1 to 62 (MTCYRGFLLG…RELAGCGSRA (62 aa)) directs the protein to the mitochondrion. Low complexity predominate over residues 24–36 (RGPGAGGPAARPR). The disordered stretch occupies residues 24 to 60 (RGPGAGGPAARPRLGGDGGGRRHLGQGQPRELAGCGS). N6-acetyllysine; alternate is present on K76. K76 is modified (N6-succinyllysine; alternate). S188 bears the Phosphoserine mark. The residue at position 302 (K302) is an N6-succinyllysine. K317 carries the N6-acetyllysine; alternate modification. K317 bears the N6-succinyllysine; alternate mark. At S367 the chain carries Phosphoserine. At K397 the chain carries N6-acetyllysine.

The protein belongs to the NAD kinase family. Homodimer. Widely expressed.

It is found in the mitochondrion. The catalysed reaction is NAD(+) + ATP = ADP + NADP(+) + H(+). With respect to regulation, inhibited by NADH, NADPH and NADP(+). Mitochondrial NAD(+) kinase that phosphorylates NAD(+) to yield NADP(+). Can use both ATP or inorganic polyphosphate as the phosphoryl donor. Also has weak NADH kinase activity in vitro; however NADH kinase activity is much weaker than the NAD(+) kinase activity and may not be relevant in vivo. The sequence is that of NAD kinase 2, mitochondrial (NADK2) from Homo sapiens (Human).